The chain runs to 335 residues: Transaldolase (335 aa).

At Ser-2 the chain carries N-acetylserine. Lys-144 acts as the Schiff-base intermediate with substrate in catalysis.

It belongs to the transaldolase family. Type 1 subfamily. Homodimer.

The catalysed reaction is D-sedoheptulose 7-phosphate + D-glyceraldehyde 3-phosphate = D-erythrose 4-phosphate + beta-D-fructose 6-phosphate. It participates in carbohydrate degradation; pentose phosphate pathway; D-glyceraldehyde 3-phosphate and beta-D-fructose 6-phosphate from D-ribose 5-phosphate and D-xylulose 5-phosphate (non-oxidative stage): step 2/3. Functionally, transaldolase is important for the balance of metabolites in the pentose-phosphate pathway. In Saccharomyces cerevisiae (strain ATCC 204508 / S288c) (Baker's yeast), this protein is Transaldolase (TAL1).